A 387-amino-acid chain; its full sequence is Transmembrane protein 120 homolog (387 aa).

Residues methionine 1–glutamine 39 adopt a coiled-coil conformation. Asparagine 111 carries an N-linked (GlcNAc...) asparagine glycan. Transmembrane regions (helical) follow at residues phenylalanine 130–tyrosine 150, leucine 155–leucine 175, phenylalanine 191–isoleucine 211, phenylalanine 216–leucine 238, glycine 264–tryptophan 284, and valine 302–valine 322. Residues arginine 346–threonine 387 form a disordered region. Phosphoserine is present on residues serine 352, serine 354, and serine 365. Residues serine 352 to proline 381 show a composition bias toward low complexity.

This sequence belongs to the TMEM120 family.

The protein resides in the membrane. This Drosophila melanogaster (Fruit fly) protein is Transmembrane protein 120 homolog.